We begin with the raw amino-acid sequence, 304 residues long: Putative S-adenosyl-L-methionine-dependent methyltransferase MSMEG_1481/MSMEI_1445 (304 aa).

Residues Asp127 and 156–157 (DL) contribute to the S-adenosyl-L-methionine site.

The protein belongs to the UPF0677 family.

Exhibits S-adenosyl-L-methionine-dependent methyltransferase activity. This chain is Putative S-adenosyl-L-methionine-dependent methyltransferase MSMEG_1481/MSMEI_1445, found in Mycolicibacterium smegmatis (strain ATCC 700084 / mc(2)155) (Mycobacterium smegmatis).